Reading from the N-terminus, the 592-residue chain is Keratin, type II cytoskeletal 5 (592 aa).

Over residues methionine 1 to serine 18 the composition is skewed to low complexity. The interval methionine 1–alanine 20 is disordered. A head region spans residues methionine 1 to glutamate 169. A phosphoserine mark is found at serine 5, serine 8, serine 16, and serine 21. Position 24 is a phosphothreonine; by CDK1 (threonine 24). Phosphoserine occurs at positions 26, 36, 50, 64, 71, 75, and 82. A Phosphothreonine; by CDK1 modification is found at threonine 153. Threonine 168 bears the Phosphothreonine; by AURKB mark. The segment at glutamate 170–leucine 205 is coil 1A. The IF rod domain maps to glutamate 170–leucine 483. Residues glutamine 206–tyrosine 224 form a linker 1 region. The interval isoleucine 225–glutamine 317 is coil 1B. Positions threonine 318–isoleucine 340 are linker 12. The segment at isoleucine 341 to glutamate 479 is coil 2. The tract at residues glutamate 480–serine 592 is tail. The tract at residues glycine 568–serine 592 is disordered. Over residues serine 574 to serine 592 the composition is skewed to low complexity.

Belongs to the intermediate filament family. Heterodimer of a type I and a type II keratin. Heterodimer with type I keratin KRT25 leading to the formation of keratin intermediate filament (KIF) network. Forms a heterodimer (via 2B domains) with KRT14 (via 2B domains). Interacts with TCHP. Interacts with EPPK1. Interacts with AMELX. Interacts with PKP1 (via N-terminus) and PKP2. Post-translationally, phosphorylated by CDK1, AURKB and Rho-kinase, phosphorylation is regulated by the cell cycle. Thr-24 phosphorylation, mediated by CDK1, peaks during prometaphase or metaphase cells with phosphorylated filamentous structures evident throughout the cytoplasm during early mitosis. CDK1 phosphorylates Thr-24 in mitotic cells at the site of injury. In terms of processing, O-glycosylated.

The protein localises to the cytoplasm. Its function is as follows. Required for the formation of keratin intermediate filaments in the basal epidermis and maintenance of the skin barrier in response to mechanical stress. Regulates the recruitment of Langerhans cells to the epidermis, potentially by modulation of the abundance of macrophage chemotactic cytokines, macrophage inflammatory cytokines and CTNND1 localization in keratinocytes. In Pan troglodytes (Chimpanzee), this protein is Keratin, type II cytoskeletal 5 (KRT5).